Consider the following 440-residue polypeptide: Protein CANDIDATE G-PROTEIN COUPLED RECEPTOR 7 (440 aa).

The N-terminal stretch at Met1–Ala24 is a signal peptide. Residues Asn124 and Asn162 are each glycosylated (N-linked (GlcNAc...) asparagine). The next 5 helical transmembrane spans lie at Leu175 to Tyr195, Ile207 to Glu227, Ile243 to Ile263, Val281 to Glu301, and Val315 to Ile335. A glycan (N-linked (GlcNAc...) asparagine) is linked at Asn351. The next 2 membrane-spanning stretches (helical) occupy residues Ile363–Ala383 and Val390–Phe410.

The protein belongs to the LU7TM family.

It is found in the membrane. Plays a role in plants and microbes interactions. G-protein coupled receptor involved in root growth mediated by the bacterial quorum-sensing signals N-acyl-homoserine lactones (AHLs). The protein is Protein CANDIDATE G-PROTEIN COUPLED RECEPTOR 7 of Arabidopsis thaliana (Mouse-ear cress).